The primary structure comprises 222 residues: Octanoyltransferase (222 aa).

A BPL/LPL catalytic domain is found at 34–214 (GEAPSTVLLL…EFRKHEEALV (181 aa)). Substrate contacts are provided by residues 72–79 (RGGKLTWH), 144–146 (AIG), and 157–159 (GVA). The Acyl-thioester intermediate role is filled by Cys175.

The protein belongs to the LipB family.

It localises to the cytoplasm. It carries out the reaction octanoyl-[ACP] + L-lysyl-[protein] = N(6)-octanoyl-L-lysyl-[protein] + holo-[ACP] + H(+). It functions in the pathway protein modification; protein lipoylation via endogenous pathway; protein N(6)-(lipoyl)lysine from octanoyl-[acyl-carrier-protein]: step 1/2. Functionally, catalyzes the transfer of endogenously produced octanoic acid from octanoyl-acyl-carrier-protein onto the lipoyl domains of lipoate-dependent enzymes. Lipoyl-ACP can also act as a substrate although octanoyl-ACP is likely to be the physiological substrate. This is Octanoyltransferase from Pseudarthrobacter chlorophenolicus (strain ATCC 700700 / DSM 12829 / CIP 107037 / JCM 12360 / KCTC 9906 / NCIMB 13794 / A6) (Arthrobacter chlorophenolicus).